We begin with the raw amino-acid sequence, 275 residues long: Catechol 1,2-dioxygenase 2 (275 aa).

4 residues coordinate Fe cation: Y158, Y192, H216, and H218.

It belongs to the intradiol ring-cleavage dioxygenase family. Homodimer. Fe(3+) serves as cofactor.

It carries out the reaction catechol + O2 = cis,cis-muconate + 2 H(+). It participates in aromatic compound metabolism; beta-ketoadipate pathway; 5-oxo-4,5-dihydro-2-furylacetate from catechol: step 1/3. Its function is as follows. Can cleave 4-methyl-, 4-chloro-, and 3-methoxycatechol at lower rates than catechol, but has no activity with 4-nitrocatechol or protocatechuic acid. The protein is Catechol 1,2-dioxygenase 2 (catA2) of Acinetobacter lwoffii.